Consider the following 291-residue polypeptide: Probable protein S-acyltransferase 12 (291 aa).

2 helical membrane passes run 14–34 (GYFM…AVVV) and 49–69 (LSAL…MLLW). One can recognise a DHHC domain in the interval 111 to 161 (GYCTKCRNVKPPRCHHCSVCQRCVLKMDHHCVWIVNCVGARNYKFFLLFLF). Cys141 functions as the S-palmitoyl cysteine intermediate in the catalytic mechanism. 2 helical membrane-spanning segments follow: residues 155–175 (FFLL…IVLL) and 198–218 (LVLA…FVVM).

It belongs to the DHHC palmitoyltransferase family.

Its subcellular location is the cell membrane. The catalysed reaction is L-cysteinyl-[protein] + hexadecanoyl-CoA = S-hexadecanoyl-L-cysteinyl-[protein] + CoA. Palmitoyl acyltransferase. The chain is Probable protein S-acyltransferase 12 (PAT12) from Arabidopsis thaliana (Mouse-ear cress).